A 327-amino-acid chain; its full sequence is Aspartate--ammonia ligase (327 aa).

It belongs to the class-II aminoacyl-tRNA synthetase family. AsnA subfamily.

The protein resides in the cytoplasm. It carries out the reaction L-aspartate + NH4(+) + ATP = L-asparagine + AMP + diphosphate + H(+). The protein operates within amino-acid biosynthesis; L-asparagine biosynthesis; L-asparagine from L-aspartate (ammonia route): step 1/1. The sequence is that of Aspartate--ammonia ligase from Fusobacterium nucleatum subsp. nucleatum (strain ATCC 25586 / DSM 15643 / BCRC 10681 / CIP 101130 / JCM 8532 / KCTC 2640 / LMG 13131 / VPI 4355).